The following is a 177-amino-acid chain: Phycoerythrin beta subunit (177 aa).

(2R,3E)-phycoerythrobilin-binding residues include tyrosine 18, lysine 28, asparagine 35, and aspartate 39. 15,16-dihydrobiliverdin-binding residues include cysteine 50, aspartate 54, and cysteine 61. (2R,3E)-phycoerythrobilin is bound by residues cysteine 82, arginine 84, and aspartate 85. Arginine 129 contributes to the 15,16-dihydrobiliverdin binding site. Asparagine 144 lines the (2R,3E)-phycoerythrobilin pocket. Residues glutamine 148 and lysine 149 each coordinate 15,16-dihydrobiliverdin. (2R,3E)-phycoerythrobilin contacts are provided by proline 154, glycine 156, and cysteine 158.

Belongs to the phycobiliprotein family. In terms of assembly, heterotetramer of 2 different alpha chains and 2 identical beta chains which form 2 alpha-beta heterodimers within the heterotetramer. The two alpha-beta heterodimers are rotated to an open configuration in contrast to the closed configuration found in other cryptophyte species due to the insertion of a single amino acid, 'Asp-65', in a conserved region of the alpha chain. In the open form, the central chromophores are not in physical contact but are separated by a water-filled channel. Post-translationally, contains three phycoerythrobilin chromophores and one 15,16-dihydrobiliverdin chromophore with binding of the phycoerythrobilin chromophores mediated by both the alpha and beta subunits.

It localises to the plastid. It is found in the chloroplast thylakoid membrane. In terms of biological role, light-harvesting photosynthetic bile pigment-protein from the phycobiliprotein complex. This is Phycoerythrin beta subunit from Hemiselmis andersenii (Cryptophyte alga).